Here is a 175-residue protein sequence, read N- to C-terminus: Threonylcarbamoyl-AMP synthase (175 aa).

One can recognise a YrdC-like domain in the interval 1–175 (MLHNDDVIAY…IINGKLIRYV (175 aa)).

The protein belongs to the SUA5 family. TsaC subfamily.

The protein resides in the cytoplasm. The catalysed reaction is L-threonine + hydrogencarbonate + ATP = L-threonylcarbamoyladenylate + diphosphate + H2O. Functionally, required for the formation of a threonylcarbamoyl group on adenosine at position 37 (t(6)A37) in tRNAs that read codons beginning with adenine. Catalyzes the conversion of L-threonine, HCO(3)(-)/CO(2) and ATP to give threonylcarbamoyl-AMP (TC-AMP) as the acyladenylate intermediate, with the release of diphosphate. The protein is Threonylcarbamoyl-AMP synthase of Buchnera aphidicola subsp. Acyrthosiphon pisum (strain APS) (Acyrthosiphon pisum symbiotic bacterium).